Here is a 93-residue protein sequence, read N- to C-terminus: Small integral membrane protein 36 (93 aa).

The helical transmembrane segment at 14–34 (LIILVASYVILLLVFLISCVL) threads the bilayer. Residues 73 to 93 (PKGPGLSLGDPAPLGKKSTMV) are disordered.

It is found in the membrane. The polypeptide is Small integral membrane protein 36 (Homo sapiens (Human)).